Consider the following 1066-residue polypeptide: MEPGKRRTKDDTWKADDLRKHLWAIQSGGSKEERKHREKKLRKESEMDLPEHKEPRCRDPDQDARSRDRVAEVHTAKESPRGERDRDRQRERRRDAKDREKEKLKEKHREAEKSHSRGKDREKEKDRRARKEELRQTVAHHNLLGQETRDRQLLERAERKGRSVSKVRSEEKDEDSERGDEDRERRYRERKLQYGDSKDNPLKYWLYKEEGERRHRKPREPDRDNKHREKSSTREKREKYSKEKSNSFSDKGEERHKEKRHKEGFHFDDERHQSNVDRKEKSAKDEPRKRESQNGEHRNRGASSKRDGTSSQHAENLVRNHGKDKDSRRKHGHEEGSSVWWKLDQRPGGEETVEIEKEETDLENARADAYTASCEDDFEDYEDDFEVCDGDDDESSNEPESREKLEELPLAQKKEIQEIQRAINAENERIGELSLKLFQKRGRTEFEKEPRTDTNSSPSRASVCGIFVDFASASHRQKSRTQALKQKMRSTKLLRLIDLDFSFTFSLLDLPPVNEYDMYIRNFGKKNTKQAYVQCNEDNVERDIQTEEIETREVWTQHPGESTVVSGGSEQRDTSDAVVMPKIDTPRLCSFLRAACQVMAVLLEEDRLAAEPSWNLRAQDRALYFSDSSSQLNTSLPFLQNRKVSSLHTSRVQRQMVVSVHDLPEKSFVPLLDSKYVLCVWDIWQPSGPQKVLICESQVTCCCLSPLKAFLLFAGTAHGSVVVWDLREDSRLHYSVTLSDGFWTFRTATFSTDGILTSVNHRSPLQAVEPISTSVHKKQSFVLSPFSTQEEMSGLSFHIASLDESGVLNVWVVVELPKADIAGSISDLGLMPGGRVKLVHSALIQLGDSLSHKGNEFWGTTQTLNVKFLPSDPNHFIIGTDMGLISHGTRQDLRVAPKLFKPQQHGIRPVKVNVIDFSPFGEPIFLAGCSDGSIRLHQLSSAFPLLQWDSSTDSHAVTGLQWSPTRPAVFLVQDDTSNIYIWDLLQSDLGPVAKQQVSPNRLVAMAAVGEPEKAGGSFLALVLARASGSIDIQHLKRRWAAPEVDECNRLRLLLQEALWPEGKLHK.

2 disordered regions span residues 22–366 (LWAI…ENAR) and 381–408 (YEDDFEVCDGDDDESSNEPESREKLEEL). Ser30 carries the post-translational modification Phosphoserine. 5 stretches are compositionally biased toward basic and acidic residues: residues 30 to 135 (SKEE…EELR), 147 to 171 (ETRDRQLLERAERKGRSVSKVRSEE), 180 to 256 (DEDR…EERH), 264 to 308 (GFHF…KRDG), and 316 to 336 (NLVRNHGKDKDSRRKHGHEEG). At Ser247 the chain carries Phosphoserine. 2 stretches are compositionally biased toward acidic residues: residues 351-362 (ETVEIEKEETDL) and 381-397 (YEDDFEVCDGDDDESSN). Over residues 399-408 (PESREKLEEL) the composition is skewed to basic and acidic residues. The segment at 473–552 (ASHRQKSRTQ…DIQTEEIETR (80 aa)) is binding to the DYNLT2B-DYNLT1/DYNLT3 dimer. 4 WD repeats span residues 694–734 (ICES…RLHY), 775–821 (VHKK…KADI), 907–947 (IRPV…PLLQ), and 952–992 (TDSH…LGPV).

This sequence belongs to the dynein light intermediate chain family. In terms of assembly, intermediate chain of the cytoplasmic dynein complex 2, a multisubunit complex, composed at least of eleven different proteins. The cytoplasmic dynein 2 complex consists of two catalytic heavy chains (HCs) and a number of non-catalytic subunits presented by intermediate chains (ICs), light intermediate chains (LICs) and light chains (LCs). Among them, a heavy chain (DYNC2H1), two intermediate chains (DYNC2I2 and DYNC2I1), a light intermediate chain (DYNC2LI1), and a light chain (DYNLT2B) are unique to the cytoplasmic dynein complex 2, but a subset of the light chains are also shared by dynein-1 and dynein-2 complexes. Interacts with DYNC2I2; their C-terminal domains each bind a copy of the heavy chain, and their extended N-terminal regions are held together by an array of light chain dimers. Interacts with DYNLT2B. Interacts (via the N-terminal half) with DYNLT2B-DYNLT1 dimer or with DYNLT2B-DYNLT3 dimer; this interaction is crucial for retrograde trafficking of ciliary proteins. As to expression, expressed in chondrocytes (at protein level).

Its subcellular location is the cell projection. It localises to the cilium. The protein localises to the cytoplasm. It is found in the cytoskeleton. The protein resides in the microtubule organizing center. Its subcellular location is the centrosome. Acts as one of several non-catalytic accessory components of the cytoplasmic dynein 2 complex (dynein-2 complex), a motor protein complex that drives the movement of cargos along microtubules within cilia and flagella in concert with the intraflagellar transport (IFT) system. DYNC2I1 plays a major role in retrograde ciliary protein trafficking in cilia and flagella. Also requires to maintain a functional transition zone. This Homo sapiens (Human) protein is Cytoplasmic dynein 2 intermediate chain 1.